The chain runs to 452 residues: Pup--protein ligase (452 aa).

Mg(2+) is bound at residue Glu9. Arg53 contacts ATP. Residue Tyr55 participates in Mg(2+) binding. Catalysis depends on Asp57, which acts as the Proton acceptor. A Mg(2+)-binding site is contributed by Glu63. The ATP site is built by Thr66 and Trp419.

Belongs to the Pup ligase/Pup deamidase family. Pup-conjugating enzyme subfamily.

The enzyme catalyses ATP + [prokaryotic ubiquitin-like protein]-L-glutamate + [protein]-L-lysine = ADP + phosphate + N(6)-([prokaryotic ubiquitin-like protein]-gamma-L-glutamyl)-[protein]-L-lysine.. It participates in protein degradation; proteasomal Pup-dependent pathway. The protein operates within protein modification; protein pupylation. In terms of biological role, catalyzes the covalent attachment of the prokaryotic ubiquitin-like protein modifier Pup to the proteasomal substrate proteins, thereby targeting them for proteasomal degradation. This tagging system is termed pupylation. The ligation reaction involves the side-chain carboxylate of the C-terminal glutamate of Pup and the side-chain amino group of a substrate lysine. In Geodermatophilus obscurus (strain ATCC 25078 / DSM 43160 / JCM 3152 / CCUG 61914 / KCC A-0152 / KCTC 9177 / NBRC 13315 / NRRL B-3577 / G-20), this protein is Pup--protein ligase.